Reading from the N-terminus, the 157-residue chain is Small ribosomal subunit protein uS7 (157 aa).

Belongs to the universal ribosomal protein uS7 family. In terms of assembly, part of the 30S ribosomal subunit. Contacts proteins S9 and S11.

Functionally, one of the primary rRNA binding proteins, it binds directly to 16S rRNA where it nucleates assembly of the head domain of the 30S subunit. Is located at the subunit interface close to the decoding center, probably blocks exit of the E-site tRNA. This Borrelia turicatae (strain 91E135) protein is Small ribosomal subunit protein uS7.